Consider the following 238-residue polypeptide: Urease accessory protein UreG (238 aa).

A compositionally biased stretch (basic and acidic residues) spans 1-15; sequence MPPHLIDGEPHDHAH. The disordered stretch occupies residues 1–27; that stretch reads MPPHLIDGEPHDHAHDRPKRQRTPGEP. 34–41 serves as a coordination point for GTP; that stretch reads GPVGSGKT.

The protein belongs to the SIMIBI class G3E GTPase family. UreG subfamily. Homodimer. UreD, UreF and UreG form a complex that acts as a GTP-hydrolysis-dependent molecular chaperone, activating the urease apoprotein by helping to assemble the nickel containing metallocenter of UreC. The UreE protein probably delivers the nickel.

The protein resides in the cytoplasm. Facilitates the functional incorporation of the urease nickel metallocenter. This process requires GTP hydrolysis, probably effectuated by UreG. The sequence is that of Urease accessory protein UreG from Nocardia farcinica (strain IFM 10152).